A 676-amino-acid chain; its full sequence is Envelope glycoprotein (676 aa).

The N-terminal stretch at M1–S32 is a signal peptide. Over I33–Q650 the chain is Extracellular. N40 carries an N-linked (GlcNAc...) asparagine; by host glycan. 5 disulfides stabilise this stretch: C53–C609, C108–C135, C121–C147, C511–C556, and C601–C608. The segment at R54–E201 is receptor-binding. N204, N228, N238, N257, N268, N296, N317, N333, N346, N386, and N413 each carry an N-linked (GlcNAc...) asparagine; by host glycan. The mucin-like region stretch occupies residues E305–T485. Over residues A315 to T335 the composition is skewed to polar residues. The tract at residues A315 to E337 is disordered. The span at T373–T391 shows a compositional bias: polar residues. Disordered regions lie at residues T373–P392 and T402–L479. Residues D414–A432 show a composition bias toward low complexity. Residues E433–T464 are compositionally biased toward polar residues. N436, N454, and N462 each carry an N-linked (GlcNAc...) asparagine; by host glycan. The fusion peptide stretch occupies residues G524–A539. Positions L554–Q595 form a coiled coil. N-linked (GlcNAc...) asparagine; by host glycosylation occurs at N563. Residues W615 to T634 adopt a coiled-coil conformation. N618 carries an N-linked (GlcNAc...) asparagine; by host glycan. Residues W651–I671 traverse the membrane as a helical segment. 2 S-palmitoyl cysteine; by host lipidation sites follow: C670 and C672. At C672–F676 the chain is on the cytoplasmic side.

This sequence belongs to the filoviruses glycoprotein family. In terms of assembly, homotrimer; each monomer consists of a GP1 and a GP2 subunit linked by disulfide bonds. The resulting peplomers (GP1,2) protrude from the virus surface as spikes. Interacts with host integrin alpha-V/ITGAV. Interacts with host CLEC10A. Binds also to host CD209 and CLEC4M/DC-SIGN(R). Interacts with host FOLR1. Interacts with BST2; this interaction inhibits the antiviral effect of BST2 and this allows viral release from infected cells. Interacts with host FCN1; this interaction enhances viral entry. Interacts with host TLR4; this interaction induces cell death in T-lymphocytes or proinflammatory cytokines and SOCS1 production in monocytes. Interacts with host entry receptor NPC1. As to quaternary structure, GP1 and GP2delta are part of GP1,2delta soluble complexes released by ectodomain shedding. In terms of processing, the signal peptide region modulates GP's high mannose glycosylation, thereby determining the efficiency of the interactions with DC-SIGN(R). Post-translationally, N-glycosylated. O-glycosylated in the mucin-like region. In terms of processing, palmitoylation of GP2 is not required for its function. Post-translationally, specific enzymatic cleavages in vivo yield mature proteins. The precursor is processed into GP1 and GP2 by host cell furin in the trans Golgi, and maybe by other host proteases, to yield the mature GP1 and GP2 proteins. The cleavage site corresponds to the furin optimal cleavage sequence [KR]-X-[KR]-R. This cleavage does not seem to be required for function. After the internalization of the virus into cell endosomes, GP1 C-terminus is removed by the endosomal proteases cathepsin B, cathepsin L, or both, leaving a 19-kDa N-terminal fragment which is further digested by cathepsin B. Proteolytic processing of GP1,2 by host ADAM17 can remove the transmembrane anchor of GP2 and leads to shedding of complexes consisting in GP1 and truncated GP2 (GP1,2delta).

The protein localises to the virion membrane. The protein resides in the host cell membrane. It localises to the secreted. Its function is as follows. Trimeric GP1,2 complexes form the virion surface spikes and mediate the viral entry processes, with GP1 acting as the receptor-binding subunit and GP2 as the membrane fusion subunit. At later times of infection, down-regulates the expression of various host cell surface molecules that are essential for immune surveillance and cell adhesion. Down-modulates several integrins including ITGA1, ITGA2, ITGA3, ITGA4, ITGA5, ITGA6, ITGAV and ITGB1. This decrease in cell adhesion molecules may lead to cell detachment, contributing to the disruption of blood vessel integrity and hemorrhages developed during infection (cytotoxicity). Interacts with host TLR4 and thereby stimulates the differentiation and activation of monocytes leading to bystander death of T-lymphocytes. Down-regulates as well the function of host natural killer cells. Counteracts the antiviral effect of host BST2/tetherin that restricts release of progeny virions from infected cells. However, cooperates with VP40 and host BST2 to activate canonical NF-kappa-B pathway in a manner dependent on neddylation. In terms of biological role, functions as a decoy for anti-GP1,2 antibodies thereby contributing to viral immune evasion. Interacts and activates host macrophages and dendritic cells inducing up-regulation of cytokine transcription. This effect is mediated throught activation of host TLR4. Functionally, responsible for binding to the receptor(s) on target cells. Interacts with CD209/DC-SIGN and CLEC4M/DC-SIGNR which act as cofactors for virus entry into dendritic cells (DCs) and endothelial cells. Binding to the macrophage specific lectin CLEC10A also seems to enhance virus infectivity. Interaction with FOLR1/folate receptor alpha may be a cofactor for virus entry in some cell types, although results are contradictory. Members of the Tyro3 receptor tyrosine kinase family also seem to be cell entry factors in filovirus infection. Once attached, the virions are internalized through clathrin-dependent endocytosis and/or macropinocytosis. After internalization of the virus into the endosomes of the host cell, proteolysis of GP1 by two cysteine proteases, CTSB/cathepsin B and CTSL/cathepsin L removes the glycan cap and allows GP1 binding to the host entry receptor NPC1. NPC1-binding, Ca(2+) and acidic pH induce a conformational change of GP2, which unmasks its fusion peptide and permit membranes fusion. Acts as a class I viral fusion protein. Under the current model, the protein has at least 3 conformational states: pre-fusion native state, pre-hairpin intermediate state, and post-fusion hairpin state. During viral and target cell membrane fusion, the coiled coil regions (heptad repeats) assume a trimer-of-hairpins structure, positioning the fusion peptide in close proximity to the C-terminal region of the ectodomain. The formation of this structure appears to drive apposition and subsequent fusion of viral and target cell membranes. Responsible for penetration of the virus into the cell cytoplasm by mediating the fusion of the membrane of the endocytosed virus particle with the endosomal membrane. Low pH in endosomes induces an irreversible conformational change in GP2, releasing the fusion hydrophobic peptide. This Epomops franqueti (Franquet's epauletted fruit bat) protein is Envelope glycoprotein (GP).